A 440-amino-acid polypeptide reads, in one-letter code: Transposon Ty1-JR2 Gag polyprotein (440 aa).

Residues 1-16 (MESQQLSQHSHISHGS) show a composition bias toward low complexity. 3 disordered regions span residues 1–93 (MESQ…MMTQ), 126–173 (PQSQ…RPPP), and 352–440 (GSRN…PETY). Composition is skewed to polar residues over residues 48-60 (TKANSQQTTTPAS), 71-93 (SPQTAQSHSPQNGPYPQQCMMTQ), and 127-152 (QSQFPQYPSSVGTPLSTPSPESGNTF). Residues 153 to 165 (TDSSSADSDMTST) are compositionally biased toward low complexity. The segment at 299–401 (NNGIHINNKV…NSKSKTARAH (103 aa)) is RNA-binding. The segment covering 402 to 418 (NVSTSNNSPSTDNDSIS) has biased composition (low complexity). S416 bears the Phosphoserine mark. Residues 419 to 428 (KSTTEPIQLN) are compositionally biased toward polar residues. Basic and acidic residues predominate over residues 429-440 (NKHDLHLRPETY).

In terms of assembly, homotrimer.

It is found in the cytoplasm. Capsid protein (CA) is the structural component of the virus-like particle (VLP), forming the shell that encapsulates the retrotransposons dimeric RNA genome. The particles are assembled from trimer-clustered units and there are holes in the capsid shells that allow for the diffusion of macromolecules. CA also has nucleocapsid-like chaperone activity, promoting primer tRNA(i)-Met annealing to the multipartite primer-binding site (PBS), dimerization of Ty1 RNA and initiation of reverse transcription. The polypeptide is Transposon Ty1-JR2 Gag polyprotein (TY1A-JR2) (Saccharomyces cerevisiae (strain ATCC 204508 / S288c) (Baker's yeast)).